Consider the following 296-residue polypeptide: 4-hydroxybenzoate octaprenyltransferase (296 aa).

A run of 9 helical transmembrane segments spans residues 28–48 (PIGIYLLLWPTLWAVWIAGKG), 52–72 (LNTVFIFVAGVFLMRAAGCVI), 102–122 (ALVLFAVLVSLSFVLVLFTNS), 123–140 (TTIWLSFGGLALAACYPF), 146–166 (YYPQVVLGAAFSWGMPMAFTA), 169–189 (GELPAAAWLLYIANLLWTVGY), 219–239 (VIILSLQGLALGCLALAGSRF), 241–261 (LGAFFYMGLLVAAACFAWEFW), and 275–295 (FLHNHWAGLAIFLGIVADYAL).

The protein belongs to the UbiA prenyltransferase family. Mg(2+) is required as a cofactor.

It localises to the cell inner membrane. The enzyme catalyses all-trans-octaprenyl diphosphate + 4-hydroxybenzoate = 4-hydroxy-3-(all-trans-octaprenyl)benzoate + diphosphate. It functions in the pathway cofactor biosynthesis; ubiquinone biosynthesis. Functionally, catalyzes the prenylation of para-hydroxybenzoate (PHB) with an all-trans polyprenyl group. Mediates the second step in the final reaction sequence of ubiquinone-8 (UQ-8) biosynthesis, which is the condensation of the polyisoprenoid side chain with PHB, generating the first membrane-bound Q intermediate 3-octaprenyl-4-hydroxybenzoate. The sequence is that of 4-hydroxybenzoate octaprenyltransferase from Pseudomonas syringae pv. tomato (strain ATCC BAA-871 / DC3000).